We begin with the raw amino-acid sequence, 236 residues long: Ubiquinone biosynthesis O-methyltransferase (236 aa).

Residues R40, G59, D80, and L124 each contribute to the S-adenosyl-L-methionine site.

This sequence belongs to the methyltransferase superfamily. UbiG/COQ3 family.

It catalyses the reaction a 3-demethylubiquinol + S-adenosyl-L-methionine = a ubiquinol + S-adenosyl-L-homocysteine + H(+). The catalysed reaction is a 3-(all-trans-polyprenyl)benzene-1,2-diol + S-adenosyl-L-methionine = a 2-methoxy-6-(all-trans-polyprenyl)phenol + S-adenosyl-L-homocysteine + H(+). It functions in the pathway cofactor biosynthesis; ubiquinone biosynthesis. Its function is as follows. O-methyltransferase that catalyzes the 2 O-methylation steps in the ubiquinone biosynthetic pathway. The polypeptide is Ubiquinone biosynthesis O-methyltransferase (Nitrosococcus oceani (strain ATCC 19707 / BCRC 17464 / JCM 30415 / NCIMB 11848 / C-107)).